Here is a 1582-residue protein sequence, read N- to C-terminus: Sca1 complex scaffold protein scaA (1582 aa).

2 stretches are compositionally biased toward low complexity: residues 1–14 (MSSL…TPST) and 109–131 (LSPS…TTST). Disordered regions lie at residues 1–22 (MSSL…TFSK) and 108–147 (GLSP…QIKK). The stretch at 4-37 (LDPSLSTTPSTNRRGTFSKAKSFRRAALNLEPQG) is one TPR 1 repeat. One copy of the TPR 2 repeat lies at 166–199 (IYTSFPESMAFDDYMDYEESLVEWKRQVEQNLGI). The segment at 246-349 (IKETNSSVND…PSTGSLAGFV (104 aa)) is disordered. Polar residues-rich tracts occupy residues 249 to 267 (TNSS…PTLR), 288 to 310 (NKDN…NSGI), and 318 to 332 (SDTS…QLDG). A Phosphoserine; by PKB modification is found at Ser359. The tract at residues 400-600 (RSGSGFGMDH…QRQTSTWFRG (201 aa)) is gefA and gefH binding. Disordered stretches follow at residues 468-493 (PKNS…GVGG) and 686-734 (SLSS…DKDK). Gly residues-rich tracts occupy residues 478–493 (GSGG…GVGG) and 694–714 (QQQG…GSGS). Low complexity predominate over residues 715–726 (GLNMSGTSGSSG). The stretch at 742–777 (MHSINNTTNVGTKEDRRQYTKILQTYEQRLQFSFRL) is one TPR 3 repeat. Gly residues predominate over residues 864 to 875 (GGGSGGASGGGI). The segment at 864–978 (GGGSGGASGG…GSISTHPNTP (115 aa)) is disordered. Low complexity predominate over residues 903-928 (HIPSGSSLLSSPPNRQGSTGSFSFIG). Residues 940 to 953 (NSSSLESPRTQSQL) show a composition bias toward polar residues. Residues 960-972 (GSSPRSHSGGSIS) are compositionally biased toward low complexity. Residues 1000–1400 (FLDLTNEKLA…SIKKEGNLYN (401 aa)) form a pppA and pho2B binding region. The TPR 4 repeat unit spans residues 1080–1113 (TQEVVRLVFVYYYLGIIQERLNFFSNNVGILGFV).

In terms of assembly, component of the Sca1 complex composed of at least gefA, gefH, scaA, phr, and the protein phosphatase 2A subunits pppA and pho2B. In terms of processing, phosphorylated at Ser-359 by PKB and PKBR1 is induced by chemoattractant.

Its subcellular location is the cell membrane. Functionally, component of the Sca1 complex, a regulator of cell motility, chemotaxis and signal relay. The Sca1 complex is recruited to the plasma membrane in a chemoattractant- and F-actin-dependent manner and is enriched at the leading edge of chemotaxing cells where it regulates F-actin dynamics and signal relay by controlling the activation of rasC and the downstream target of rapamycin complex 2 (TORC2)-Akt/protein kinase B (PKB) pathway. ScaA acts as a molecular scaffold, bringing together gefA, gefH and phr with PP2A. This is Sca1 complex scaffold protein scaA from Dictyostelium discoideum (Social amoeba).